The primary structure comprises 190 residues: Elongation factor P 2 (190 aa).

Belongs to the elongation factor P family.

It is found in the cytoplasm. The protein operates within protein biosynthesis; polypeptide chain elongation. In terms of biological role, involved in peptide bond synthesis. Stimulates efficient translation and peptide-bond synthesis on native or reconstituted 70S ribosomes in vitro. Probably functions indirectly by altering the affinity of the ribosome for aminoacyl-tRNA, thus increasing their reactivity as acceptors for peptidyl transferase. The sequence is that of Elongation factor P 2 (efp2) from Chlamydia caviae (strain ATCC VR-813 / DSM 19441 / 03DC25 / GPIC) (Chlamydophila caviae).